Reading from the N-terminus, the 320-residue chain is Probable 5-dehydro-4-deoxyglucarate dehydratase (320 aa).

It belongs to the DapA family.

The catalysed reaction is 5-dehydro-4-deoxy-D-glucarate + H(+) = 2,5-dioxopentanoate + CO2 + H2O. The protein operates within carbohydrate acid metabolism; D-glucarate degradation; 2,5-dioxopentanoate from D-glucarate: step 2/2. The polypeptide is Probable 5-dehydro-4-deoxyglucarate dehydratase (Streptomyces griseus subsp. griseus (strain JCM 4626 / CBS 651.72 / NBRC 13350 / KCC S-0626 / ISP 5235)).